The following is a 59-amino-acid chain: MAKTIKITQTRSLIGRLPKHKATMAGLGLRRIGHTVEREDTPAVRGMINLVSYMVKVEE.

The protein belongs to the universal ribosomal protein uL30 family. Part of the 50S ribosomal subunit.

The sequence is that of Large ribosomal subunit protein uL30 from Proteus mirabilis (strain HI4320).